The following is a 501-amino-acid chain: Glycogenin-2 (501 aa).

The UDP site is built by leucine 42, threonine 44, asparagine 45, tyrosine 48, and arginine 110. UDP-alpha-D-glucose is bound by residues leucine 42, threonine 44, asparagine 45, tyrosine 48, arginine 110, lysine 119, aspartate 135, alanine 136, aspartate 137, asparagine 166, serine 167, aspartate 193, aspartate 196, and glutamine 197. UDP contacts are provided by aspartate 135, alanine 136, and aspartate 137. Aspartate 135 contacts Mn(2+). Aspartate 137 provides a ligand contact to Mn(2+). O-linked (Glc...) tyrosine glycosylation occurs at tyrosine 228. The UDP site is built by histidine 245, glycine 248, and lysine 251. Residue histidine 245 coordinates Mn(2+). Residues glycine 248 and lysine 251 each contribute to the UDP-alpha-D-glucose site. Residues serine 368, serine 399, and serine 459 each carry the phosphoserine modification.

As to quaternary structure, homodimer, tightly complexed to glycogen synthase. Mn(2+) serves as cofactor. In terms of processing, self-glycosylated by the transfer of glucose residues from UDP-glucose to itself, forming an alpha-1,4-glycan of around 10 residues attached to Tyr-228. As to expression, detected in liver (at protein level). Expressed preferentially in liver, heart, and pancreas.

Its subcellular location is the cytoplasm. It is found in the nucleus. The catalysed reaction is L-tyrosyl-[glycogenin] + UDP-alpha-D-glucose = alpha-D-glucosyl-L-tyrosyl-[glycogenin] + UDP + H(+). It catalyses the reaction [1,4-alpha-D-glucosyl](n)-L-tyrosyl-[glycogenin] + UDP-alpha-D-glucose = [1,4-alpha-D-glucosyl](n+1)-L-tyrosyl-[glycogenin] + UDP + H(+). The protein operates within glycan biosynthesis; glycogen biosynthesis. Its function is as follows. Glycogenin participates in the glycogen biosynthetic process along with glycogen synthase and glycogen branching enzyme. It catalyzes the formation of a short alpha (1,4)-glucosyl chain covalently attached via a glucose 1-O-tyrosyl linkage to internal tyrosine residues and these chains act as primers for the elongation reaction catalyzed by glycogen synthase. The sequence is that of Glycogenin-2 (GYG2) from Homo sapiens (Human).